Here is a 220-residue protein sequence, read N- to C-terminus: Endonuclease NucS (220 aa).

The protein belongs to the NucS endonuclease family.

The protein localises to the cytoplasm. Functionally, cleaves both 3' and 5' ssDNA extremities of branched DNA structures. In Frankia alni (strain DSM 45986 / CECT 9034 / ACN14a), this protein is Endonuclease NucS.